Here is a 239-residue protein sequence, read N- to C-terminus: Transcription factor MYB10 (239 aa).

HTH myb-type domains are found at residues 11–63 and 64–118; these read KSQV…INYL and RPGL…KKRL. 2 DNA-binding regions (H-T-H motif) span residues 39–63 and 91–114; these read WRSL…INYL and WSKI…NTHL.

In terms of tissue distribution, expressed in cauline leaves and siliques.

The protein localises to the nucleus. In terms of biological role, involved in metal ions homeostasis, including iron ions (Fe) acquisition, via the regulation of NAS4 and NAS2 genes expression. Necessary for plant survival in alkaline soil where iron availability is greatly restricted. Triggers tolerance to nickel (Ni) and zinc (Zn) ions. This Arabidopsis thaliana (Mouse-ear cress) protein is Transcription factor MYB10.